Reading from the N-terminus, the 372-residue chain is Cell division protein FtsZ 1 (372 aa).

GTP contacts are provided by residues Gly-51–Asn-55, Gly-138–Gly-140, Glu-169, Arg-173, and Asp-216. A disordered region spans residues Gln-351–Leu-372. Over residues Glu-353–Val-362 the composition is skewed to acidic residues.

The protein belongs to the FtsZ family. In terms of assembly, homodimer. Polymerizes to form a dynamic ring structure in a strictly GTP-dependent manner. Interacts directly with several other division proteins.

It localises to the cytoplasm. In terms of biological role, essential cell division protein that forms a contractile ring structure (Z ring) at the future cell division site. The regulation of the ring assembly controls the timing and the location of cell division. One of the functions of the FtsZ ring is to recruit other cell division proteins to the septum to produce a new cell wall between the dividing cells. Binds GTP and shows GTPase activity. This is Cell division protein FtsZ 1 from Pyrococcus abyssi (strain GE5 / Orsay).